Here is a 78-residue protein sequence, read N- to C-terminus: UPF0335 protein A1E_00570 (78 aa).

Belongs to the UPF0335 family.

The chain is UPF0335 protein A1E_00570 from Rickettsia canadensis (strain McKiel).